Here is a 426-residue protein sequence, read N- to C-terminus: Glutamyl-tRNA reductase (426 aa).

Substrate is bound by residues 49–52 (TCNR), Ser-101, 106–108 (EPQ), and Gln-112. Cys-50 functions as the Nucleophile in the catalytic mechanism. 181–186 (GAGETI) serves as a coordination point for NADP(+). The tract at residues 405 to 426 (RLFPEKPGYQHPPHSYPDREDR) is disordered.

It belongs to the glutamyl-tRNA reductase family. As to quaternary structure, homodimer.

It catalyses the reaction (S)-4-amino-5-oxopentanoate + tRNA(Glu) + NADP(+) = L-glutamyl-tRNA(Glu) + NADPH + H(+). Its pathway is porphyrin-containing compound metabolism; protoporphyrin-IX biosynthesis; 5-aminolevulinate from L-glutamyl-tRNA(Glu): step 1/2. Functionally, catalyzes the NADPH-dependent reduction of glutamyl-tRNA(Glu) to glutamate 1-semialdehyde (GSA). This chain is Glutamyl-tRNA reductase, found in Xanthomonas axonopodis pv. citri (strain 306).